We begin with the raw amino-acid sequence, 248 residues long: MAGHSKWANIKHKKAKEDAKRGKIFTKLIREITVAARLGGGDKDANPRLRAAIATALANNMSKDTIERAVVKGAGGDESANVEEVRYEGYGPGGVAIIVDCMTDNRNRTVGEVRHAFTKSGGNLGTDGSVAYMFTKRGIISFAPGVDEDALMEVALEAGAEDIITHEDGSIDVYTDPHDFSDIQEVLIEKGFNSENAEVTFDAETKAELDTETAEKVMALIDKLEDLDDVQNVYSNANFTQELIEQIG.

This sequence belongs to the TACO1 family.

The protein resides in the cytoplasm. This chain is Probable transcriptional regulatory protein FTF0655, found in Francisella tularensis subsp. tularensis (strain FSC 198).